We begin with the raw amino-acid sequence, 376 residues long: ATP phosphoribosyltransferase regulatory subunit (376 aa).

The protein belongs to the class-II aminoacyl-tRNA synthetase family. HisZ subfamily. In terms of assembly, heteromultimer composed of HisG and HisZ subunits.

It localises to the cytoplasm. It functions in the pathway amino-acid biosynthesis; L-histidine biosynthesis; L-histidine from 5-phospho-alpha-D-ribose 1-diphosphate: step 1/9. Required for the first step of histidine biosynthesis. May allow the feedback regulation of ATP phosphoribosyltransferase activity by histidine. This is ATP phosphoribosyltransferase regulatory subunit from Brucella ovis (strain ATCC 25840 / 63/290 / NCTC 10512).